Consider the following 1362-residue polypeptide: DNA-directed RNA polymerase subunit beta' (1362 aa).

Positions 1 to 14 (MTSSSKSRKSKSSK) are enriched in basic residues. A disordered region spans residues 1-39 (MTSSSKSRKSKSSKASKAAKEAPVSASRPLSKTPPPFRN). Over residues 15–27 (ASKAAKEAPVSAS) the composition is skewed to low complexity. Positions 248, 315, 322, and 325 each coordinate Zn(2+). The disordered stretch occupies residues 1316–1336 (TRHNIDPSASNFAAFTRPDAD).

The protein belongs to the RNA polymerase beta' chain family. RpoC2 subfamily. In terms of assembly, in cyanobacteria the RNAP catalytic core is composed of 2 alpha, 1 beta, 1 beta', 1 gamma and 1 omega subunit. When a sigma factor is associated with the core the holoenzyme is formed, which can initiate transcription. Zn(2+) serves as cofactor.

The enzyme catalyses RNA(n) + a ribonucleoside 5'-triphosphate = RNA(n+1) + diphosphate. DNA-dependent RNA polymerase catalyzes the transcription of DNA into RNA using the four ribonucleoside triphosphates as substrates. The polypeptide is DNA-directed RNA polymerase subunit beta' (Synechococcus sp. (strain CC9605)).